Consider the following 122-residue polypeptide: Large ribosomal subunit protein uL14 (122 aa).

The protein belongs to the universal ribosomal protein uL14 family. Part of the 50S ribosomal subunit. Forms a cluster with proteins L3 and L19. In the 70S ribosome, L14 and L19 interact and together make contacts with the 16S rRNA in bridges B5 and B8.

Its function is as follows. Binds to 23S rRNA. Forms part of two intersubunit bridges in the 70S ribosome. This Methylobacterium radiotolerans (strain ATCC 27329 / DSM 1819 / JCM 2831 / NBRC 15690 / NCIMB 10815 / 0-1) protein is Large ribosomal subunit protein uL14.